The primary structure comprises 417 residues: NADH-quinone oxidoreductase subunit D (417 aa).

This sequence belongs to the complex I 49 kDa subunit family. In terms of assembly, NDH-1 is composed of 14 different subunits. Subunits NuoB, C, D, E, F, and G constitute the peripheral sector of the complex.

The protein resides in the cell inner membrane. The enzyme catalyses a quinone + NADH + 5 H(+)(in) = a quinol + NAD(+) + 4 H(+)(out). In terms of biological role, NDH-1 shuttles electrons from NADH, via FMN and iron-sulfur (Fe-S) centers, to quinones in the respiratory chain. The immediate electron acceptor for the enzyme in this species is believed to be ubiquinone. Couples the redox reaction to proton translocation (for every two electrons transferred, four hydrogen ions are translocated across the cytoplasmic membrane), and thus conserves the redox energy in a proton gradient. The polypeptide is NADH-quinone oxidoreductase subunit D (Hydrogenovibrio crunogenus (strain DSM 25203 / XCL-2) (Thiomicrospira crunogena)).